The following is a 508-amino-acid chain: MLPTQAGAAAALGRGSALGGSLNRTPTGRPGGGGGTRGANGGRVPGNGAGLGPGRLEREAAAAAATTPAPTAGALYSGSEGDSESGEEEELGAERRGLKRSLSEMEIGMVVGGPEASAAATGGYGPVSGAVSGAKPGKKTRGRVKIKMEFIDNKLRRYTTFSKRKTGIMKKAYELSTLTGTQVLLLVASETGHVYTFATRKLQPMITSETGKALIQTCLNSPDSPPRSDPTTDQRMSATGFEETDLTYQVSESDSSGETKDTLKPAFTVTNLPGTTSTIQTAPSTSTTMQVSSGPSFPITNYLAPVSASVSPSAVSSANGTVLKSTGSGPVSSGGLMQLPTSFTLMPGGAVAQQVPVQAIQVHQAPQQASPSRDSSTDLTQTSSSGTVTLPATIMTSSVPTTVGGHMMYPSPHAVMYAPTSGLGDGSLTVLNAFSQAPSTMQVSHSQVQEPGGVPQVFLTASSGTVQIPVSAVQLHQMAVIGQQAGSSSNLTELQVVNLDTAHSTKSE.

A compositionally biased stretch (low complexity) spans 1-28 (MLPTQAGAAAALGRGSALGGSLNRTPTG). The interval 1–97 (MLPTQAGAAA…EEELGAERRG (97 aa)) is disordered. A compositionally biased stretch (gly residues) spans 29–53 (RPGGGGGTRGANGGRVPGNGAGLGP). Residues 61 to 80 (AAAAATTPAPTAGALYSGSE) are compositionally biased toward low complexity. 5 positions are modified to phosphoserine: S77, S79, S83, S85, and S103. The span at 81 to 91 (GDSESGEEEEL) shows a compositional bias: acidic residues. A DNA-binding region spans residues 133–222 (GAKPGKKTRG…ALIQTCLNSP (90 aa)). Residues 141–201 (RGRVKIKMEF…GHVYTFATRK (61 aa)) enclose the MADS-box domain. The segment at 168-222 (IMKKAYELSTLTGTQVLLLVASETGHVYTFATRKLQPMITSETGKALIQTCLNSP) is involved in dimerization. Positions 219–240 (LNSPDSPPRSDPTTDQRMSATG) are disordered. Phosphoserine occurs at positions 224 and 253. O-linked (GlcNAc) serine glycans are attached at residues S277, S307, S309, S316, and S383. Residues 362 to 385 (VHQAPQQASPSRDSSTDLTQTSSS) are disordered. Phosphoserine; by dsDNA kinase is present on residues S435 and S446.

Binds DNA as a multimer, probably a dimer. Interacts with MRTFA, forming the SRF-MRTFA nuclear complex which binds the 5'-CArG-3' consensus motif (CArG box) on DNA via SRF. Forms a nuclear ternary complex with MRTFA and SCAI. Interacts with MRTFB. Interacts with MLLT7/FOXO4, NKX3A and SSRP1. Interacts with ARID2. Interacts with SRFBP1. Interacts with FOXK1. Interacts with LPXN. Interacts with OLFM2; the interaction promotes dissociation of SRF from the transcriptional repressor HEY2, facilitates binding of SRF to target genes and promotes smooth muscle differentiation. Interacts with NKX3-1. Interacts with KAT5. Interacts with PURB. In terms of processing, phosphorylated by PRKDC.

Its subcellular location is the nucleus. SRF is a transcription factor that binds to the serum response element (SRE), a short sequence of dyad symmetry located 300 bp to the 5' of the site of transcription initiation of some genes (such as FOS). Together with MRTFA transcription coactivator, controls expression of genes regulating the cytoskeleton during development, morphogenesis and cell migration. The SRF-MRTFA complex activity responds to Rho GTPase-induced changes in cellular globular actin (G-actin) concentration, thereby coupling cytoskeletal gene expression to cytoskeletal dynamics. Required for cardiac differentiation and maturation. In Homo sapiens (Human), this protein is Serum response factor (SRF).